Reading from the N-terminus, the 189-residue chain is 3-hydroxyanthranilate 3,4-dioxygenase (189 aa).

Residue Arg-46 coordinates O2. Positions 50, 56, and 94 each coordinate Fe cation. Glu-56 contacts substrate. Residues Arg-98 and Glu-109 each contribute to the substrate site. Fe cation is bound by residues Cys-124, Cys-127, Cys-161, and Cys-164.

This sequence belongs to the 3-HAO family. As to quaternary structure, homodimer. Requires Fe(2+) as cofactor.

The enzyme catalyses 3-hydroxyanthranilate + O2 = (2Z,4Z)-2-amino-3-carboxymuconate 6-semialdehyde. It participates in cofactor biosynthesis; NAD(+) biosynthesis; quinolinate from L-kynurenine: step 3/3. Functionally, catalyzes the oxidative ring opening of 3-hydroxyanthranilate to 2-amino-3-carboxymuconate semialdehyde, which spontaneously cyclizes to quinolinate. In Shewanella woodyi (strain ATCC 51908 / MS32), this protein is 3-hydroxyanthranilate 3,4-dioxygenase.